The sequence spans 145 residues: MIALIQRVTQAKVDVDGKTIGAIDKGLLVLLGVEREDDSFKMEKLANKVMSYRVFSDENGKMNLNVSQAGGALLVVSQFTLAADTGRGLRPSFSGAGTPDQAKVLYEEFVAFCRAKGMPTQTGEFAADMQVSLVNDGPVTFNLQV.

Residues 137–138 (GP) carry the Gly-cisPro motif, important for rejection of L-amino acids motif.

Belongs to the DTD family. In terms of assembly, homodimer.

The protein localises to the cytoplasm. The enzyme catalyses glycyl-tRNA(Ala) + H2O = tRNA(Ala) + glycine + H(+). The catalysed reaction is a D-aminoacyl-tRNA + H2O = a tRNA + a D-alpha-amino acid + H(+). An aminoacyl-tRNA editing enzyme that deacylates mischarged D-aminoacyl-tRNAs. Also deacylates mischarged glycyl-tRNA(Ala), protecting cells against glycine mischarging by AlaRS. Acts via tRNA-based rather than protein-based catalysis; rejects L-amino acids rather than detecting D-amino acids in the active site. By recycling D-aminoacyl-tRNA to D-amino acids and free tRNA molecules, this enzyme counteracts the toxicity associated with the formation of D-aminoacyl-tRNA entities in vivo and helps enforce protein L-homochirality. The chain is D-aminoacyl-tRNA deacylase from Shewanella sediminis (strain HAW-EB3).